We begin with the raw amino-acid sequence, 551 residues long: Membrane protein insertase YidC (551 aa).

A helical transmembrane segment spans residues 3-23; that stretch reads ANHIRILLLVTIAIMFISLMG. A compositionally biased stretch (polar residues) spans 33 to 47; sequence NTKQQTSATQNNSHY. A disordered region spans residues 33–59; sequence NTKQQTSATQNNSHYDNADSSTNTDVT. The span at 50 to 59 shows a compositional bias: low complexity; sequence ADSSTNTDVT. 3 consecutive transmembrane segments (helical) span residues 361 to 381, 431 to 451, and 504 to 524; these read LVGN…LIFY, LSGC…YWVL, and VMMF…SGLV.

It belongs to the OXA1/ALB3/YidC family. Type 1 subfamily. In terms of assembly, interacts with the Sec translocase complex via SecD. Specifically interacts with transmembrane segments of nascent integral membrane proteins during membrane integration.

It localises to the cell inner membrane. Its function is as follows. Required for the insertion and/or proper folding and/or complex formation of integral membrane proteins into the membrane. Involved in integration of membrane proteins that insert both dependently and independently of the Sec translocase complex, as well as at least some lipoproteins. Aids folding of multispanning membrane proteins. The chain is Membrane protein insertase YidC from Francisella tularensis subsp. mediasiatica (strain FSC147).